We begin with the raw amino-acid sequence, 394 residues long: Phosphoglycerate kinase (394 aa).

Substrate is bound by residues 21-23 (DFN), R36, 59-62 (HLGR), R118, and R151. Residues K202, G293, E324, and 350–353 (GGDS) each bind ATP.

This sequence belongs to the phosphoglycerate kinase family. As to quaternary structure, monomer.

The protein localises to the cytoplasm. It carries out the reaction (2R)-3-phosphoglycerate + ATP = (2R)-3-phospho-glyceroyl phosphate + ADP. Its pathway is carbohydrate degradation; glycolysis; pyruvate from D-glyceraldehyde 3-phosphate: step 2/5. This chain is Phosphoglycerate kinase, found in Exiguobacterium sp. (strain ATCC BAA-1283 / AT1b).